An 81-amino-acid chain; its full sequence is Conotoxin Cl9.6 (81 aa).

The N-terminal stretch at 1-20 (MSTLGMTLLILLLLLPLATP) is a signal peptide. A propeptide spanning residues 21–40 (DDVGQPPKRDTLRNLLKIGT) is cleaved from the precursor. Cystine bridges form between cysteine 46-cysteine 69, cysteine 54-cysteine 76, and cysteine 60-cysteine 78.

As to expression, expressed by the venom duct.

Its subcellular location is the secreted. The protein is Conotoxin Cl9.6 of Californiconus californicus (California cone).